We begin with the raw amino-acid sequence, 257 residues long: Probable oxidoreductase yanE (257 aa).

Belongs to the oxidoreductase OpS7 family.

Its pathway is secondary metabolite biosynthesis; terpenoid biosynthesis. Part of the gene cluster that mediates the biosynthesis of yanuthone D, a fungal isoprenoid epoxycyclohexenone that acts as an antibiotic against fungi and bacteria. The first step of the pathway is the synthesis of 6-methylsalicylic acid (6-MSA) by the polyketide synthase yanA. 6-MSA is then converted to m-cresol by the decarboxylase yanB. The cytochrome P450 monooxygenase yanC then catalyzes the oxidation of m-cresol to toluquinol. Epoxidation of toluquinol is then performed by the short chain dehydrogenase yanD, with the help of yanE, and a further prenylation by yanG leads to 7-deacetoxyyanuthone A. The next step is the hydroxylation of C-22 of 7-deacetoxyyanuthone A by the cytochrome P450 monooxygenase yanH to yield 22-deacetylyanuthone A. O-Mevalon transferase yanI then attaches mevalon to the hydroxyl group of 22-deacetylyanuthone A to produce yanuthone E. Finally, the FAD-dependent monooxygenase yanF oxidizes the hydroxyl group at C15 of yanuthone E to form yanuthone D. Furthermore, several branching points in the pathway lead to the production of yanuthones F and G from 7-deacetoxyyanuthone A; yanuthones H and I from 22-deacetylyanuthone A; and yanuthone J from yanuthone E. YanE is also involved in the synthesis of yanuthone X1 which does not have 6-methylsalicylic acid (6-MSA) as precursor. The chain is Probable oxidoreductase yanE from Aspergillus niger (strain ATCC 1015 / CBS 113.46 / FGSC A1144 / LSHB Ac4 / NCTC 3858a / NRRL 328 / USDA 3528.7).